The primary structure comprises 232 residues: Ubiquinone biosynthesis O-methyltransferase (232 aa).

Residues Arg-36, Gly-55, Asp-76, and Met-120 each coordinate S-adenosyl-L-methionine.

Belongs to the methyltransferase superfamily. UbiG/COQ3 family.

It carries out the reaction a 3-demethylubiquinol + S-adenosyl-L-methionine = a ubiquinol + S-adenosyl-L-homocysteine + H(+). The catalysed reaction is a 3-(all-trans-polyprenyl)benzene-1,2-diol + S-adenosyl-L-methionine = a 2-methoxy-6-(all-trans-polyprenyl)phenol + S-adenosyl-L-homocysteine + H(+). It functions in the pathway cofactor biosynthesis; ubiquinone biosynthesis. O-methyltransferase that catalyzes the 2 O-methylation steps in the ubiquinone biosynthetic pathway. In Burkholderia lata (strain ATCC 17760 / DSM 23089 / LMG 22485 / NCIMB 9086 / R18194 / 383), this protein is Ubiquinone biosynthesis O-methyltransferase.